The sequence spans 237 residues: Ribonuclease PH (237 aa).

Residues R86 and 124–126 (GTR) contribute to the phosphate site.

This sequence belongs to the RNase PH family. In terms of assembly, homohexameric ring arranged as a trimer of dimers.

The enzyme catalyses tRNA(n+1) + phosphate = tRNA(n) + a ribonucleoside 5'-diphosphate. Functionally, phosphorolytic 3'-5' exoribonuclease that plays an important role in tRNA 3'-end maturation. Removes nucleotide residues following the 3'-CCA terminus of tRNAs; can also add nucleotides to the ends of RNA molecules by using nucleoside diphosphates as substrates, but this may not be physiologically important. Probably plays a role in initiation of 16S rRNA degradation (leading to ribosome degradation) during starvation. The polypeptide is Ribonuclease PH (Shewanella frigidimarina (strain NCIMB 400)).